A 210-amino-acid polypeptide reads, in one-letter code: Protein GrpE (210 aa).

Residues 1–42 (MANEERTIPETNVASERPEDPVESQTRAEGGEQIQEAAPETA) are disordered.

It belongs to the GrpE family. Homodimer.

Its subcellular location is the cytoplasm. In terms of biological role, participates actively in the response to hyperosmotic and heat shock by preventing the aggregation of stress-denatured proteins, in association with DnaK and GrpE. It is the nucleotide exchange factor for DnaK and may function as a thermosensor. Unfolded proteins bind initially to DnaJ; upon interaction with the DnaJ-bound protein, DnaK hydrolyzes its bound ATP, resulting in the formation of a stable complex. GrpE releases ADP from DnaK; ATP binding to DnaK triggers the release of the substrate protein, thus completing the reaction cycle. Several rounds of ATP-dependent interactions between DnaJ, DnaK and GrpE are required for fully efficient folding. The protein is Protein GrpE of Nitrosococcus oceani (strain ATCC 19707 / BCRC 17464 / JCM 30415 / NCIMB 11848 / C-107).